A 378-amino-acid chain; its full sequence is 1-acyl-sn-glycerol-3-phosphate acyltransferase delta (378 aa).

A helical transmembrane segment spans residues 11-31; the sequence is FLCHLIFCYVFIVSGLIINTI. The HXXXXD motif signature appears at 96–101; that stretch reads HKFEID. 3 helical membrane passes run 125–145, 307–327, and 338–358; these read ELAYVPIIGWMWYFTEMVFCT, TLVNWLFWASMLLYPFFRFVI, and LASFVLVFFVASMGVRWMIGV.

This sequence belongs to the 1-acyl-sn-glycerol-3-phosphate acyltransferase family.

The protein localises to the endoplasmic reticulum membrane. It carries out the reaction a 1-acyl-sn-glycero-3-phosphate + an acyl-CoA = a 1,2-diacyl-sn-glycero-3-phosphate + CoA. The enzyme catalyses (4Z,7Z,10Z,13Z,16Z,19Z)-docosahexaenoyl-CoA + 1-hexadecanoyl-sn-glycero-3-phosphate = 1-hexadecanoyl-2-(4Z,7Z,10Z,13Z,16Z,19Z-docosahexaenoyl)-sn-glycero-3-phosphate + CoA. The catalysed reaction is 1-octadecanoyl-sn-glycero-3-phosphate + (9Z,12Z)-octadecadienoyl-CoA = 1-octadecanoyl-2-(9Z,12Z-octadecadienoyl)-sn-glycero-3-phosphate + CoA. It catalyses the reaction 1-octadecanoyl-sn-glycero-3-phosphate + (4Z,7Z,10Z,13Z,16Z,19Z)-docosahexaenoyl-CoA = 1-octadecanoyl-2-(4Z,7Z,10Z,13Z,16Z,19Z-docosahexaenoyl)-sn-glycero-3-phosphate + CoA. It carries out the reaction (4Z,7Z,10Z,13Z,16Z,19Z)-docosahexaenoyl-CoA + 1-(9Z-octadecenoyl)-sn-glycero-3-phosphate = 1-(9Z-octadecenoyl)-2-(4Z,7Z,10Z,13Z,16Z,19Z-docosahexaenoyl)-sn-glycero-3-phosphate + CoA. Its pathway is phospholipid metabolism; CDP-diacylglycerol biosynthesis; CDP-diacylglycerol from sn-glycerol 3-phosphate: step 2/3. In terms of biological role, converts 1-acyl-sn-glycerol-3-phosphate (lysophosphatidic acid or LPA) into 1,2-diacyl-sn-glycerol-3-phosphate (phosphatidic acid or PA) by incorporating an acyl moiety at the sn-2 position of the glycerol backbone. Exhibits high acyl-CoA specificity for polyunsaturated fatty acyl-CoA, especially docosahexaenoyl-CoA (22:6-CoA, DHA-CoA). The sequence is that of 1-acyl-sn-glycerol-3-phosphate acyltransferase delta (AGPAT4) from Bos taurus (Bovine).